Consider the following 928-residue polypeptide: Putative replication origin binding protein (928 aa).

The Helicase ATP-binding domain maps to 386–516; sequence NIVPPKGHIT…QVLRDILMTA (131 aa). An ATP-binding site is contributed by 399-406; it reads ASLGTGKT. Positions 484–487 match the DEAD box motif; sequence DECD.

It belongs to the herpesviridae oribp family.

Displays bipolar ssDNA and dsDNA unwinding activities that require the same core catalytic residues for unwinding in either direction, the 3'-5' direction being more robust. This Escherichia coli (Enterobacteria phage T5) protein is Putative replication origin binding protein.